Consider the following 58-residue polypeptide: Enterocin-HF (58 aa).

Positions 1–15 are excised as a propeptide; the sequence is MEKLTVKEMSQVVGG. Cysteines 24 and 29 form a disulfide.

It localises to the secreted. Its function is as follows. Bacteriocin. The chain is Enterocin-HF (entHF) from Enterococcus faecium (Streptococcus faecium).